The sequence spans 468 residues: Glutamate--tRNA ligase 2 (468 aa).

Residues 9–19 carry the 'HIGH' region motif; it reads PSPTGFLHIGG. Residues 238-242 carry the 'KMSKS' region motif; that stretch reads KLSKR. Lysine 241 contributes to the ATP binding site.

Belongs to the class-I aminoacyl-tRNA synthetase family. Glutamate--tRNA ligase type 1 subfamily. Monomer.

The protein resides in the cytoplasm. It carries out the reaction tRNA(Glu) + L-glutamate + ATP = L-glutamyl-tRNA(Glu) + AMP + diphosphate. Catalyzes the attachment of glutamate to tRNA(Glu) in a two-step reaction: glutamate is first activated by ATP to form Glu-AMP and then transferred to the acceptor end of tRNA(Glu). The chain is Glutamate--tRNA ligase 2 from Rhodospirillum rubrum (strain ATCC 11170 / ATH 1.1.1 / DSM 467 / LMG 4362 / NCIMB 8255 / S1).